The following is a 224-amino-acid chain: MTKKICIAIDGPAAAGKSTVAKIVAKKLRFVYIDTGAMYRAVTYIALKNNIAYEDEKGIAALLQKTVIRFEPGEIQQVFVGNENVTEVIRSLEITNHVSIVAAHPSIREALQERQQVFATEGGIVMDGRDIGTAVLPNAELKIFLLASVEERAERRYKENMAKGFAGDLDQLKKEIEERDHLDYTRTHSPLKKADDAIEVDTTSMSIDEVANKILSLAELKINN.

An ATP-binding site is contributed by 11 to 19 (GPAAAGKST).

It belongs to the cytidylate kinase family. Type 1 subfamily.

The protein localises to the cytoplasm. It carries out the reaction CMP + ATP = CDP + ADP. The enzyme catalyses dCMP + ATP = dCDP + ADP. The sequence is that of Cytidylate kinase from Listeria monocytogenes serotype 4a (strain HCC23).